The chain runs to 1018 residues: Cell wall protein 1 (1018 aa).

A signal peptide spans 1–17 (MLPSIVISIVLASFVSA). The CFEM 1 domain occupies 32–143 (NPYTIYPSVA…SSLSAAATAV (112 aa)). 4 disulfides stabilise this stretch: Cys60–Cys100, Cys64–Cys95, Cys74–Cys81, and Cys83–Cys116. Asp78 contributes to the heme binding site. The segment at 147-227 (SEQPVETSSE…STPEDNPYTI (81 aa)) is disordered. Positions 148 to 164 (EQPVETSSEPAGSSQSV) are enriched in polar residues. Residues 165-221 (ESSQPAETSSSEPAETSSSEPAETSSETSSEQPASSEPAETSSEESSTITSAPSTPE) show a composition bias toward low complexity. CFEM domains lie at 223–334 (NPYT…ATAV) and 393–504 (SSSS…ATAV). 4 disulfide bridges follow: Cys251–Cys291, Cys255–Cys286, Cys265–Cys272, and Cys274–Cys307. Asp269 contributes to the heme binding site. The tract at residues 338-396 (SEQSVETSSESAESSQSVESSQPAETSSEQPSETSSETSSQQLSSITSAPDSSATSSSS) is disordered. Intrachain disulfides connect Cys421/Cys461, Cys425/Cys456, Cys435/Cys442, and Cys444/Cys477. Asp439 provides a ligand contact to heme. A disordered region spans residues 507 to 557 (SDSASETASQEPSETSSEQPSETASQQPAETSSEESSTITSAPSTPEDNPY). The segment covering 509–553 (SASETASQEPSETSSEQPSETASQQPAETSSEESSTITSAPSTPE) has biased composition (low complexity). A CFEM 4 domain is found at 555 to 666 (NPYTIYPSVA…SSLNAAATAV (112 aa)). Intrachain disulfides connect Cys583–Cys623, Cys587–Cys618, Cys597–Cys604, and Cys606–Cys639. Residue Asp601 participates in heme binding. Residues 677–785 (SASESASQVP…STSTKSDAAS (109 aa)) are disordered. Positions 690-766 (SAASSQSANN…AISESVAPSS (77 aa)) are enriched in low complexity. Residues Asn698, Asn708, Asn718, Asn729, Asn743, Asn753, Asn769, Asn798, and Asn965 are each glycosylated (N-linked (GlcNAc...) asparagine). A compositionally biased stretch (polar residues) spans 767-785 (YGNSTIAQPSTSTKSDAAS). A lipid anchor (GPI-anchor amidated serine) is attached at Ser989. A propeptide spans 990–1018 (VAIANMANTKFASTMSLLVASFVFVGLFI) (removed in mature form).

The protein belongs to the RBT5 family. Post-translationally, the GPI-anchor is attached to the protein in the endoplasmic reticulum and serves to target the protein to the cell surface. There, the glucosamine-inositol phospholipid moiety is cleaved off and the GPI-modified mannoprotein is covalently attached via its lipidless GPI glycan remnant to the 1,6-beta-glucan of the outer cell wall layer.

The protein localises to the secreted. It localises to the cell wall. It is found in the membrane. Its function is as follows. Heme-binding protein involved in heme-iron utilization. The ability to acquire iron from host tissues is a major virulence factor of pathogenic microorganisms. Required for biofilm formation. The protein is Cell wall protein 1 (CSA1) of Candida albicans (strain SC5314 / ATCC MYA-2876) (Yeast).